Here is a 506-residue protein sequence, read N- to C-terminus: Mitogen-activated protein kinase 13 (506 aa).

The 292-residue stretch at 13–304 (YQIQEVVGKG…AEEALADPYF (292 aa)) folds into the Protein kinase domain. ATP contacts are provided by residues 19-27 (VGKGSYGVV) and lysine 42. Catalysis depends on aspartate 139, which acts as the Proton acceptor. Threonine 175 carries the phosphothreonine modification. The TXY motif lies at 175-177 (TDY). Tyrosine 177 is subject to Phosphotyrosine. The interval 384–421 (YSRGERSTPLRRQHASLPRERVCSSVDSNNQDSDNEER) is disordered.

This sequence belongs to the protein kinase superfamily. CMGC Ser/Thr protein kinase family. MAP kinase subfamily. Post-translationally, dually phosphorylated on Thr-175 and Tyr-177, which activates the enzyme.

It catalyses the reaction L-seryl-[protein] + ATP = O-phospho-L-seryl-[protein] + ADP + H(+). The catalysed reaction is L-threonyl-[protein] + ATP = O-phospho-L-threonyl-[protein] + ADP + H(+). Its activity is regulated as follows. Activated by threonine and tyrosine phosphorylation. The polypeptide is Mitogen-activated protein kinase 13 (MPK13) (Oryza sativa subsp. indica (Rice)).